Here is a 193-residue protein sequence, read N- to C-terminus: uncharacterized protein (193 aa).

This is an uncharacterized protein from Methanocaldococcus jannaschii (strain ATCC 43067 / DSM 2661 / JAL-1 / JCM 10045 / NBRC 100440) (Methanococcus jannaschii).